The sequence spans 462 residues: L-seryl-tRNA(Sec) selenium transferase (462 aa).

Position 293 is an N6-(pyridoxal phosphate)lysine (lysine 293).

It belongs to the SelA family. Pyridoxal 5'-phosphate serves as cofactor.

It is found in the cytoplasm. The enzyme catalyses L-seryl-tRNA(Sec) + selenophosphate + H(+) = L-selenocysteinyl-tRNA(Sec) + phosphate. Its pathway is aminoacyl-tRNA biosynthesis; selenocysteinyl-tRNA(Sec) biosynthesis; selenocysteinyl-tRNA(Sec) from L-seryl-tRNA(Sec) (bacterial route): step 1/1. Converts seryl-tRNA(Sec) to selenocysteinyl-tRNA(Sec) required for selenoprotein biosynthesis. This chain is L-seryl-tRNA(Sec) selenium transferase, found in Clostridium botulinum (strain Loch Maree / Type A3).